Consider the following 251-residue polypeptide: NADPH-dependent oxidoreductase (251 aa).

The protein belongs to the flavin oxidoreductase frp family. The cofactor is FMN.

Its function is as follows. Reduces FMN, organic nitro compounds and disulfide DTNB. Involved in maintenance of the cellular redox state and the disulfide stress response. This is NADPH-dependent oxidoreductase (nfrA) from Staphylococcus aureus (strain USA300).